We begin with the raw amino-acid sequence, 666 residues long: MGQTKSKIKSKYASYLSFIKILLKRGGVKVSTKNLIKLFQIIEQFCPWFPEQGTLDLKDWKRIGKELKQAGRKGNIIPLTVWNDWAIIKAALEPFQTEEDSISVSDAPGSCIIDCNENTRKKSQKETEGLHCEYAAEPVMAQSTQNVDYNQLQEVIYPETLKLEGKGPELVGPSESKPRGTSPLPAGQVPVTLQPQTQVKENKTQPPVAYQYWPPAELQYRPPPESQYGYPGMPPAPQGRAPYPQPPTRRLNPTAPPSRQGSELHEIIDKSRKEGDTEAWQFPVMLEPMPPGEGAQEGEPPTVEARYKSFSIKMLKDMKEGVKQYGPNSPYMRTLLDSIAHGHRLIPYDWEILAKSSLLPSQFLQFKTWWIDGVQEQVQRNRAANPPVNIDADQLLGIGQNWSTISQQALMQNEAIEQVRAICLRAWEKIQDPGSTCPSFNTVRQSSKEPYPDFVARLQDVAQKSIADEKARKVIVELMAYENANPECQSAIKPLKGKVPAGSDVISEYVKACDGIGGAMHKAMLMAQAITGVVLGGQVRTFGGKCYNCGQIGHLKKNCPVLNKQNITIQATTTGREPPDLCPRCKKGKHWASQCRSKFDKNGQPLSGNEQRGQPQAPQQTGAFPIQPFVPQGFQGQQPPLSQVFQGISQLPQYNNCPPPQAAVQQ.

Gly2 carries N-myristoyl glycine lipidation. 2 disordered regions span residues 165 to 189 (GKGP…AGQV) and 217 to 264 (ELQY…GSEL). Residues 232–247 (GMPPAPQGRAPYPQPP) are compositionally biased toward pro residues. 2 consecutive CCHC-type zinc fingers follow at residues 544 to 561 (GKCY…NCPV) and 580 to 597 (DLCP…QCRS). Residues 598-641 (KFDKNGQPLSGNEQRGQPQAPQQTGAFPIQPFVPQGFQGQQPPL) are disordered. A compositionally biased stretch (polar residues) spans 604–622 (QPLSGNEQRGQPQAPQQTG). The segment covering 624–640 (FPIQPFVPQGFQGQQPP) has biased composition (low complexity).

Belongs to the beta type-B retroviral Gag protein family. HERV class-II K(HML-2) gag subfamily. In terms of processing, myristoylation is essential for retroviral assembly. Alteration of the glycine residue leads to a block in the budding of particles and an accumulation of Gag inside the cell. Post-translationally, specific enzymatic cleavages may yield mature proteins.

The protein localises to the cell membrane. The products of the Gag polyproteins of infectious retroviruses perform highly complex orchestrated tasks during the assembly, budding, maturation, and infection stages of the viral replication cycle. During viral assembly, the proteins form membrane associations and self-associations that ultimately result in budding of an immature virion from the infected cell. Gag precursors also function during viral assembly to selectively bind and package two plus strands of genomic RNA. Endogenous Gag proteins may have kept, lost or modified their original function during evolution. This Homo sapiens (Human) protein is Endogenous retrovirus group K member 21 Gag polyprotein (ERVK-21).